Here is a 531-residue protein sequence, read N- to C-terminus: Multidrug resistance protein fnx1 (531 aa).

Residues 1–30 (MVDQVNLATEQTSLLYPEVSRKKEELSVNK) lie on the Cytoplasmic side of the membrane. A helical transmembrane segment spans residues 31–51 (WTILPALWVGGFLSALDMTIV). Over 52 to 225 (ASLYPVIGSE…NASLLSRIDY (174 aa)) the chain is Lumenal. A helical membrane pass occupies residues 226 to 246 (LGSFLLVTGITALVVTFNMGG). Over 247–252 (DAFPWV) the chain is Cytoplasmic. The chain crosses the membrane as a helical span at residues 253-273 (SPVIITLLVSSVLILFAFYWV). The Lumenal portion of the chain corresponds to 274-297 (EKNIAVEPIAPVEILSQPTPLNVC). The helical transmembrane segment at 298–318 (LGNFFNAFCSFVIVYELPLFF) threads the bilayer. Residues 319 to 360 (ETTLLMPSSEAGVRIFPYVISTSVGSLCSGLYMKKTGRYRNL) are Cytoplasmic-facing. Residues 361–381 (VIAGFFFMLMGIVSFAVLTSF) traverse the membrane as a helical segment. Residues 382–385 (GHRT) lie on the Lumenal side of the membrane. The chain crosses the membrane as a helical span at residues 386-406 (PLILISLCLAMTGCSYGMNLT). At 407–496 (STLIAIISSL…QKLVIKSYAT (90 aa)) the chain is on the cytoplasmic side. The helical transmembrane segment at 497–517 (AFTWTFALVAIIAFAGFWCSL) threads the bilayer. Residues 518–531 (RIKQFYLHTSVDRS) lie on the Lumenal side of the membrane.

This sequence belongs to the major facilitator superfamily.

The protein resides in the vacuole membrane. Efflux transporter. Confers resistance to a variety of toxic compounds. This chain is Multidrug resistance protein fnx1 (fnx1), found in Schizosaccharomyces pombe (strain 972 / ATCC 24843) (Fission yeast).